Here is a 112-residue protein sequence, read N- to C-terminus: Probable 4-amino-4-deoxy-L-arabinose-phosphoundecaprenol flippase subunit ArnE (112 aa).

Residues 35–110 enclose the EamA domain; that stretch reads RHILFWLGMA…IVVGIVILGT (76 aa). 3 consecutive transmembrane segments (helical) span residues 37-57, 66-86, and 89-109; these read ILFW…LWLS, IAYP…WGIW, and PVAR…VILG.

Belongs to the ArnE family. Heterodimer of ArnE and ArnF.

Its subcellular location is the cell inner membrane. Its pathway is bacterial outer membrane biogenesis; lipopolysaccharide biosynthesis. Functionally, translocates 4-amino-4-deoxy-L-arabinose-phosphoundecaprenol (alpha-L-Ara4N-phosphoundecaprenol) from the cytoplasmic to the periplasmic side of the inner membrane. The polypeptide is Probable 4-amino-4-deoxy-L-arabinose-phosphoundecaprenol flippase subunit ArnE (Klebsiella pneumoniae (strain 342)).